A 204-amino-acid polypeptide reads, in one-letter code: Large ribosomal subunit protein eL15 (204 aa).

Belongs to the eukaryotic ribosomal protein eL15 family. In terms of assembly, component of the large ribosomal subunit.

The protein resides in the cytoplasm. Functionally, component of the large ribosomal subunit. The ribosome is a large ribonucleoprotein complex responsible for the synthesis of proteins in the cell. This Paramisgurnus dabryanus protein is Large ribosomal subunit protein eL15 (rpl15).